Reading from the N-terminus, the 702-residue chain is Ribosomal RNA large subunit methyltransferase K/L (702 aa).

In terms of domain architecture, THUMP spans 43–154 (LIYQSLMWSR…KETASIALDL (112 aa)).

It belongs to the methyltransferase superfamily. RlmKL family.

Its subcellular location is the cytoplasm. The enzyme catalyses guanosine(2445) in 23S rRNA + S-adenosyl-L-methionine = N(2)-methylguanosine(2445) in 23S rRNA + S-adenosyl-L-homocysteine + H(+). It carries out the reaction guanosine(2069) in 23S rRNA + S-adenosyl-L-methionine = N(2)-methylguanosine(2069) in 23S rRNA + S-adenosyl-L-homocysteine + H(+). Functionally, specifically methylates the guanine in position 2445 (m2G2445) and the guanine in position 2069 (m7G2069) of 23S rRNA. The chain is Ribosomal RNA large subunit methyltransferase K/L from Salmonella choleraesuis (strain SC-B67).